We begin with the raw amino-acid sequence, 459 residues long: Ribulose bisphosphate carboxylase large chain (459 aa).

Residues N98 and T148 each contribute to the substrate site. K150 serves as the catalytic Proton acceptor. K152 is a binding site for substrate. 3 residues coordinate Mg(2+): K176, D178, and E179. The residue at position 176 (K176) is an N6-carboxylysine. H268 (proton acceptor) is an active-site residue. Residues R269, H301, and S353 each coordinate substrate.

Belongs to the RuBisCO large chain family. Type I subfamily. Heterohexadecamer of 8 large chains and 8 small chains. Mg(2+) serves as cofactor.

The protein resides in the plastid. The protein localises to the chloroplast. It catalyses the reaction 2 (2R)-3-phosphoglycerate + 2 H(+) = D-ribulose 1,5-bisphosphate + CO2 + H2O. The catalysed reaction is D-ribulose 1,5-bisphosphate + O2 = 2-phosphoglycolate + (2R)-3-phosphoglycerate + 2 H(+). In terms of biological role, ruBisCO catalyzes two reactions: the carboxylation of D-ribulose 1,5-bisphosphate, the primary event in carbon dioxide fixation, as well as the oxidative fragmentation of the pentose substrate in the photorespiration process. Both reactions occur simultaneously and in competition at the same active site. The sequence is that of Ribulose bisphosphate carboxylase large chain (rbcL) from Calyptrosphaera sphaeroidea.